The primary structure comprises 381 residues: E3 ubiquitin-protein ligase KCMF1 (381 aa).

Residue Ser-2 is modified to N-acetylserine. Ser-2 carries the post-translational modification Phosphoserine. The segment at 4 to 60 (HEGVSCDACLKGNFRGRRYKCLICYDYDLCASCYESGATTTRHTTDHPMQCILTRVD) adopts a ZZ-type zinc-finger fold. Positions 9, 12, 24, 27, 33, 36, 46, and 50 each coordinate Zn(2+). Residues 78 to 101 (FTCPYCGKMGYTETSLQEHVTSEH) form a C2H2-type zinc finger. A disordered region spans residues 154 to 194 (MFHPGRGLGGPRARRSNMHFTSSSTGGLSSSQSSYSPSSRE). 3 positions are modified to phosphoserine: Ser-169, Ser-189, and Ser-212. Over residues 175-192 (SSSTGGLSSSQSSYSPSS) the composition is skewed to low complexity. Residues 224-259 (ASQLQQLQMQLQLERQHAQAARQQLETARNASRRTN) adopt a coiled-coil conformation. Residues Ser-335 and Ser-336 each carry the phosphoserine modification.

The protein belongs to the KCMF1 family. In terms of assembly, component of the SIFI complex, composed of KCMF1, UBR4 and calmodulin (CALM1, CALM2 or CALM3). In terms of tissue distribution, testis, liver, kidney, heart and skeletal muscle.

The protein resides in the cytoplasm. The protein localises to the late endosome. It is found in the lysosome. It carries out the reaction S-ubiquitinyl-[E2 ubiquitin-conjugating enzyme]-L-cysteine + [acceptor protein]-L-lysine = [E2 ubiquitin-conjugating enzyme]-L-cysteine + N(6)-ubiquitinyl-[acceptor protein]-L-lysine.. The protein operates within protein modification; protein ubiquitination. In terms of biological role, E3 ubiquitin-protein ligase which accepts ubiquitin from an E2 ubiquitin-conjugating enzyme and then transfers it to targeted substrates, promoting their degradation by the proteasome. Together with UBR4, component of the N-end rule pathway: ubiquitinates proteins bearing specific N-terminal residues that are destabilizing according to the N-end rule, leading to their degradation. Does not ubiquitinate proteins that are acetylated at the N-terminus. Together with UBR4, part of a protein quality control pathway that catalyzes ubiquitination and degradation of proteins that have been oxidized in response to reactive oxygen species (ROS): recognizes proteins with an Arg-CysO3(H) degron at the N-terminus, and mediates assembly of heterotypic 'Lys-63'-/'Lys-27'-linked branched ubiquitin chains on oxidized proteins, leading to their degradation by autophagy. Catalytic component of the SIFI complex, a multiprotein complex required to inhibit the mitochondrial stress response after a specific stress event has been resolved: ubiquitinates and degrades (1) components of the HRI-mediated signaling of the integrated stress response, such as DELE1 and EIF2AK1/HRI, as well as (2) unimported mitochondrial precursors. Within the SIFI complex, UBR4 initiates ubiquitin chain that are further elongated or branched by KCMF1. The protein is E3 ubiquitin-protein ligase KCMF1 of Mus musculus (Mouse).